The following is a 73-amino-acid chain: Translation initiation factor IF-1 (73 aa).

Residues 1-73 (MAKKDGVIEI…TRGRIVYRYK (73 aa)) enclose the S1-like domain.

The protein belongs to the IF-1 family. In terms of assembly, component of the 30S ribosomal translation pre-initiation complex which assembles on the 30S ribosome in the order IF-2 and IF-3, IF-1 and N-formylmethionyl-tRNA(fMet); mRNA recruitment can occur at any time during PIC assembly.

Its subcellular location is the cytoplasm. In terms of biological role, one of the essential components for the initiation of protein synthesis. Stabilizes the binding of IF-2 and IF-3 on the 30S subunit to which N-formylmethionyl-tRNA(fMet) subsequently binds. Helps modulate mRNA selection, yielding the 30S pre-initiation complex (PIC). Upon addition of the 50S ribosomal subunit IF-1, IF-2 and IF-3 are released leaving the mature 70S translation initiation complex. The sequence is that of Translation initiation factor IF-1 from Leifsonia xyli subsp. xyli (strain CTCB07).